Reading from the N-terminus, the 162-residue chain is Beta-lactoglobulin-1 (162 aa).

2 cysteine pairs are disulfide-bonded: cysteine 66/cysteine 160 and cysteine 106/cysteine 119.

This sequence belongs to the calycin superfamily. Lipocalin family. Monomer.

The protein resides in the secreted. Lactoglobulin is the primary component of whey, it binds retinol and is probably involved in the transport of that molecule. The protein is Beta-lactoglobulin-1 (LGB1) of Felis catus (Cat).